We begin with the raw amino-acid sequence, 78 residues long: TP53-regulated inhibitor of apoptosis 1-A (78 aa).

A coiled-coil region spans residues 1-52; it reads MNSVGEECTDMKRDYDQCFNRWFAEKFLKGAGSGDPCTELFRRYRECVQKAI. Positions 5 to 55 constitute a CHCH domain; that stretch reads GEECTDMKRDYDQCFNRWFAEKFLKGAGSGDPCTELFRRYRECVQKAIKDK. 2 consecutive short sequence motifs (cx9C motif) follow at residues 8-18 and 37-47; these read CTDMKRDYDQC and CTELFRRYREC. Intrachain disulfides connect Cys-8–Cys-47 and Cys-18–Cys-37.

It belongs to the TRIAP1/MDM35 family. Monomer. Forms a complex with prelid1 in the mitochondrion intermembrane space. Interacts with prelid3a.

It is found in the mitochondrion. Its subcellular location is the mitochondrion intermembrane space. It carries out the reaction a 1,2-diacyl-sn-glycero-3-phosphate(in) = a 1,2-diacyl-sn-glycero-3-phosphate(out). Involved in the modulation of the mitochondrial apoptotic pathway by ensuring the accumulation of cardiolipin (CL) in mitochondrial membranes. The triap1:prelid1 complex probably functions as a phosphatidic acid (PA) transporter across the mitochondrion intermembrane space to provide PA for cardiolipin CL synthesis in the inner membrane. Likewise, the triap1:prelid3a complex mediates the transfer of phosphatidic acid (PA) between liposomes (in vitro) and probably functions as a PA transporter across the mitochondrion intermembrane space (in vivo). Mediates cell survival by inhibiting activation of caspase-9 which prevents induction of apoptosis. Required for pronephros development; probably involved at an early stage in the formation of pronephric components derived from the somatic layer. This is TP53-regulated inhibitor of apoptosis 1-A (triap1-a) from Xenopus laevis (African clawed frog).